Here is a 90-residue protein sequence, read N- to C-terminus: Small ribosomal subunit protein bS18B (90 aa).

It belongs to the bacterial ribosomal protein bS18 family. As to quaternary structure, part of the 30S ribosomal subunit. Forms a tight heterodimer with protein bS6.

Its function is as follows. Binds as a heterodimer with protein bS6 to the central domain of the 16S rRNA, where it helps stabilize the platform of the 30S subunit. This Roseiflexus sp. (strain RS-1) protein is Small ribosomal subunit protein bS18B.